The chain runs to 354 residues: Probable L-ascorbate-6-phosphate lactonase UlaG (354 aa).

The protein belongs to the UlaG family. A divalent metal cation serves as cofactor.

Its subcellular location is the cytoplasm. It carries out the reaction L-ascorbate 6-phosphate + H2O = 3-dehydro-L-gulonate 6-phosphate. Its pathway is cofactor degradation; L-ascorbate degradation; D-xylulose 5-phosphate from L-ascorbate: step 1/4. Its function is as follows. Probably catalyzes the hydrolysis of L-ascorbate-6-P into 3-keto-L-gulonate-6-P. Is essential for L-ascorbate utilization under anaerobic conditions. The polypeptide is Probable L-ascorbate-6-phosphate lactonase UlaG (Escherichia fergusonii (strain ATCC 35469 / DSM 13698 / CCUG 18766 / IAM 14443 / JCM 21226 / LMG 7866 / NBRC 102419 / NCTC 12128 / CDC 0568-73)).